Reading from the N-terminus, the 720-residue chain is DNA ligase (720 aa).

Residues 60–64, 109–110, and Glu140 contribute to the NAD(+) site; these read DYDYD and SL. Catalysis depends on Lys142, which acts as the N6-AMP-lysine intermediate. NAD(+) is bound by residues Arg163 and Glu201. Residues 220-239 form a disordered region; that stretch reads GLPPFANPRNAAAGSIRQKD. Residues Lys320 and Lys344 each contribute to the NAD(+) site. Zn(2+) contacts are provided by Cys438, Cys441, Cys456, and Cys461. The 91-residue stretch at 619–709 folds into the BRCT domain; that stretch reads KVADVLKGKT…VDLEKIKKED (91 aa).

The protein belongs to the NAD-dependent DNA ligase family. LigA subfamily. It depends on Mn(2+) as a cofactor. Mg(2+) is required as a cofactor.

The enzyme catalyses NAD(+) + (deoxyribonucleotide)n-3'-hydroxyl + 5'-phospho-(deoxyribonucleotide)m = (deoxyribonucleotide)n+m + AMP + beta-nicotinamide D-nucleotide.. Functionally, DNA ligase that catalyzes the formation of phosphodiester linkages between 5'-phosphoryl and 3'-hydroxyl groups in double-stranded DNA using NAD as a coenzyme and as the energy source for the reaction. It is essential for DNA replication and repair of damaged DNA. The sequence is that of DNA ligase from Aquifex aeolicus (strain VF5).